A 447-amino-acid chain; its full sequence is N-succinylarginine dihydrolase (447 aa).

Residues 21-30, Asn112, and 139-140 each bind substrate; these read AGLAHGNVAS and HR. Glu176 is a catalytic residue. A substrate-binding site is contributed by Arg215. His251 is an active-site residue. Residues Asp253 and Asn364 each contribute to the substrate site. The Nucleophile role is filled by Cys370.

This sequence belongs to the succinylarginine dihydrolase family. Homodimer.

The catalysed reaction is N(2)-succinyl-L-arginine + 2 H2O + 2 H(+) = N(2)-succinyl-L-ornithine + 2 NH4(+) + CO2. The protein operates within amino-acid degradation; L-arginine degradation via AST pathway; L-glutamate and succinate from L-arginine: step 2/5. Its function is as follows. Catalyzes the hydrolysis of N(2)-succinylarginine into N(2)-succinylornithine, ammonia and CO(2). This Chromohalobacter salexigens (strain ATCC BAA-138 / DSM 3043 / CIP 106854 / NCIMB 13768 / 1H11) protein is N-succinylarginine dihydrolase.